The primary structure comprises 519 residues: Putative cysteine ligase BshC (519 aa).

2 coiled-coil regions span residues 51–71 (LNAL…SLKE) and 440–464 (TKLN…HEQA).

This sequence belongs to the BshC family.

In terms of biological role, involved in bacillithiol (BSH) biosynthesis. May catalyze the last step of the pathway, the addition of cysteine to glucosamine malate (GlcN-Mal) to generate BSH. The sequence is that of Putative cysteine ligase BshC from Exiguobacterium sibiricum (strain DSM 17290 / CCUG 55495 / CIP 109462 / JCM 13490 / 255-15).